The chain runs to 101 residues: Small ribosomal subunit protein uS14 (101 aa).

This sequence belongs to the universal ribosomal protein uS14 family. As to quaternary structure, part of the 30S ribosomal subunit. Contacts proteins S3 and S10.

Binds 16S rRNA, required for the assembly of 30S particles and may also be responsible for determining the conformation of the 16S rRNA at the A site. The protein is Small ribosomal subunit protein uS14 of Pelagibacter ubique (strain HTCC1062).